The sequence spans 520 residues: ATP-dependent RNA helicase CshA (520 aa).

A Q motif motif is present at residues 2 to 30 (TKFSEFGLDEKIVKSVNRMGFEEATPIQE). The Helicase ATP-binding domain occupies 33–203 (IPLGLEGKDL…ERFMHSPELI (171 aa)). Residue 46–53 (AQTGTGKT) coordinates ATP. Residues 151 to 154 (DEAD) carry the DEAD box motif. In terms of domain architecture, Helicase C-terminal spans 214–374 (LIEQFFVKVH…PLQAPTWDEA (161 aa)). Residues 428-439 (KTPVHITEERPL) show a composition bias toward basic and acidic residues. The tract at residues 428 to 520 (KTPVHITEER…NKGNYSQKSK (93 aa)) is disordered. Composition is skewed to gly residues over residues 442–468 (RGGGGYKGKNGKGGKGGGYRGGSGKGG) and 482–496 (SGGGSGGGSGSGGGG).

The protein belongs to the DEAD box helicase family. CshA subfamily. In terms of assembly, oligomerizes, may be a member of the RNA degradosome.

The protein localises to the cytoplasm. The enzyme catalyses ATP + H2O = ADP + phosphate + H(+). Its function is as follows. DEAD-box RNA helicase possibly involved in RNA degradation. Unwinds dsRNA in both 5'- and 3'-directions, has RNA-dependent ATPase activity. Involved in cold tolerance, motility and alcohol tolerance. The chain is ATP-dependent RNA helicase CshA from Listeria monocytogenes serovar 1/2a (strain ATCC BAA-679 / EGD-e).